The chain runs to 651 residues: DNA endonuclease RBBP8 (651 aa).

Coiled-coil stretches lie at residues 35 to 84 (LQEL…EDRL) and 117 to 138 (ISEL…SLEL). Disordered stretches follow at residues 138–199 (LERL…PESR), 363–433 (NGRL…EHQA), and 487–539 (YESC…SDKS). The span at 363 to 379 (NGRLQSKNQETSEIETT) shows a compositional bias: polar residues. A compositionally biased stretch (basic and acidic residues) spans 380–391 (QDSKKKCLDGHT). Acidic residues predominate over residues 503 to 515 (VYEEEREEDDPEE). The segment covering 525-539 (RPADRKPLVSDSDKS) has biased composition (basic and acidic residues). Residues threonine 599 and threonine 611 each carry the phosphothreonine modification.

Belongs to the COM1/SAE2/CtIP family. In terms of assembly, homotetramer; formed by antiparallel association of helical extensions protruding from the N-termini of two parallel coiled-coil dimers. Interacts with the MRN complex; the interaction links DNA sensing to resection. Interacts with samhd1. In terms of processing, phosphorylation at Thr-599 and Thr-611 promote interaction with nbn and recruitment to double-strand breaks (DSBs).

Its subcellular location is the nucleus. The protein resides in the chromosome. Its function is as follows. Endonuclease that cooperates with the MRE11-RAD50-NBN (MRN) complex in DNA-end resection, the first step of double-strand break (DSB) repair through the homologous recombination (HR) pathway. Functions downstream of the MRN complex and ATM, promotes ATR activation and its recruitment to DSBs in the S/G2 phase facilitating the generation of ssDNA. Specifically promotes the endonuclease activity of the MRN complex to clear DNA ends containing protein adducts: recruited to DSBs by nbn following phosphorylation, and promotes the endonuclease of mre11 to clear protein-DNA adducts and generate clean double-strand break ends. This is DNA endonuclease RBBP8 (rbbp8) from Danio rerio (Zebrafish).